The chain runs to 653 residues: Aspartate--tRNA ligase, mitochondrial (653 aa).

The transit peptide at 1–46 directs the protein to the mitochondrion; it reads MYLGFWLSRLCRGLSRPIGKTMRPIWGSLSRNLALSSQRIPEFSSF. At Thr-218 the chain carries Phosphothreonine. Ser-241 bears the Phosphoserine mark. The tract at residues 243-246 is aspartate; it reads QQFK. Arg-265 contributes to the L-aspartate binding site. Residues 265 to 267 and Glu-534 contribute to the ATP site; that span reads RDE. Arg-541 serves as a coordination point for L-aspartate. Residue 583–586 participates in ATP binding; the sequence is GLDR.

This sequence belongs to the class-II aminoacyl-tRNA synthetase family. Type 1 subfamily. As to quaternary structure, homodimer.

The protein localises to the mitochondrion matrix. Its subcellular location is the mitochondrion membrane. It catalyses the reaction tRNA(Asp) + L-aspartate + ATP = L-aspartyl-tRNA(Asp) + AMP + diphosphate. Functionally, catalyzes the attachment of aspartate to tRNA(Asp) in a two-step reaction: aspartate is first activated by ATP to form Asp-AMP and then transferred to the acceptor end of tRNA(Asp). The polypeptide is Aspartate--tRNA ligase, mitochondrial (Dars2) (Mus musculus (Mouse)).